We begin with the raw amino-acid sequence, 608 residues long: Endo-1,4-beta-xylanase C (608 aa).

An N-terminal signal peptide occupies residues 1–25 (MKTFSVTKSSVVFAMALGMASTAFA). One can recognise a GH11 1 domain in the interval 40–250 (TITSNQTGKI…VNGEVRGGHM (211 aa)). The active-site Nucleophile is the Glu142. Glu237 acts as the Proton donor in catalysis. Residues 263 to 294 (SDPVSSSSVKSSSSTDAPKSSSSKGNGNVSGK) show a composition bias toward low complexity. Residues 263-296 (SDPVSSSSVKSSSSTDAPKSSSSKGNGNVSGKID) are disordered. A GH11 2 domain is found at 316 to 514 (NSSVTGNVGS…GSGSFDVTYF (199 aa)). Glu409 functions as the Nucleophile in the catalytic mechanism. Glu501 serves as the catalytic Proton donor. The interval 520–539 (AHPLAQPEPESSSSEAKVES) is disordered. Residues 527-539 (EPESSSSEAKVES) are compositionally biased toward low complexity.

It belongs to the glycosyl hydrolase 11 (cellulase G) family.

The catalysed reaction is Endohydrolysis of (1-&gt;4)-beta-D-xylosidic linkages in xylans.. The protein operates within glycan degradation; xylan degradation. Cleaves xylans with the production of xylose, xylobiose and xylo-oligosaccharides. This Fibrobacter succinogenes (strain ATCC 19169 / S85) protein is Endo-1,4-beta-xylanase C (xynC).